Here is a 504-residue protein sequence, read N- to C-terminus: Glucose-6-phosphate isomerase (504 aa).

E333 functions as the Proton donor in the catalytic mechanism. Catalysis depends on residues H364 and K473.

The protein belongs to the GPI family.

It localises to the cytoplasm. It carries out the reaction alpha-D-glucose 6-phosphate = beta-D-fructose 6-phosphate. It functions in the pathway carbohydrate biosynthesis; gluconeogenesis. The protein operates within carbohydrate degradation; glycolysis; D-glyceraldehyde 3-phosphate and glycerone phosphate from D-glucose: step 2/4. Catalyzes the reversible isomerization of glucose-6-phosphate to fructose-6-phosphate. This is Glucose-6-phosphate isomerase from Xanthomonas oryzae pv. oryzae (strain MAFF 311018).